The chain runs to 95 residues: Blastocyst protein 4 (95 aa).

Positions 1–20 (MGAVFAIIGGFALDSPILRL) are cleaved as a signal peptide.

This Oryctolagus cuniculus (Rabbit) protein is Blastocyst protein 4.